Here is a 429-residue protein sequence, read N- to C-terminus: Enolase (429 aa).

Gln167 is a binding site for (2R)-2-phosphoglycerate. Catalysis depends on Glu209, which acts as the Proton donor. Residues Asp246, Glu289, and Asp316 each contribute to the Mg(2+) site. (2R)-2-phosphoglycerate contacts are provided by Lys341, Arg370, Ser371, and Lys392. The active-site Proton acceptor is Lys341.

It belongs to the enolase family. Component of the RNA degradosome, a multiprotein complex involved in RNA processing and mRNA degradation. Mg(2+) serves as cofactor.

The protein resides in the cytoplasm. The protein localises to the secreted. It is found in the cell surface. The enzyme catalyses (2R)-2-phosphoglycerate = phosphoenolpyruvate + H2O. The protein operates within carbohydrate degradation; glycolysis; pyruvate from D-glyceraldehyde 3-phosphate: step 4/5. In terms of biological role, catalyzes the reversible conversion of 2-phosphoglycerate (2-PG) into phosphoenolpyruvate (PEP). It is essential for the degradation of carbohydrates via glycolysis. This is Enolase from Pseudomonas entomophila (strain L48).